We begin with the raw amino-acid sequence, 263 residues long: Hatching enzyme 1.2 (263 aa).

A signal peptide spans 1–19; that stretch reads MDIRASLSILLLLFGLSQA. Residues 20–64 constitute a propeptide, activation peptide; sequence SPLREFEAIFVSEPETVDITTQILETNKGSSEVLFEGDVVLPKNR. One can recognise a Peptidase M12A domain in the interval 65-263; the sequence is NALICEDKSC…ILRINKLYGC (199 aa). 3 cysteine pairs are disulfide-bonded: cysteine 69/cysteine 74, cysteine 114/cysteine 263, and cysteine 135/cysteine 155. Histidine 163 serves as a coordination point for Zn(2+). Glutamate 164 is an active-site residue. Positions 167 and 173 each coordinate Zn(2+).

Requires Zn(2+) as cofactor. In terms of tissue distribution, expressed in cells of the hatching gland.

It is found in the secreted. The catalysed reaction is Hydrolysis of the inner layer of fish egg envelope. Also hydrolysis of casein and small molecule substrates such as succinyl-Leu-Leu-Val-Tyr-|-7-(4-methyl)coumarylamide.. Functionally, metalloendopeptidase which participates in the breakdown of the egg envelope at the time of hatching. Cleaves the N-terminal regions of the zona pellucia glycoproteins ZP2 and ZP3, where it specifically recognizes the peptide sequences TVQQS-|-DYLIK (major site) and KLMLK-|-APEPF (minor site). The chain is Hatching enzyme 1.2 from Danio rerio (Zebrafish).